The following is a 525-amino-acid chain: Serine protease 1 (525 aa).

Residues 1–32 (MKCKKPSALFSALALVGALGAASVLGAASANS) form the signal peptide. A propeptide spanning residues 33–211 (ASPVAAATVQ…TVSDDVIVPV (179 aa)) is cleaved from the precursor. Residues Cys-223 and Cys-239 are joined by a disulfide bond. Active-site charge relay system residues include His-238 and Asp-270. 5 cysteine pairs are disulfide-bonded: Cys-310–Cys-320, Cys-346–Cys-376, Cys-412–Cys-431, Cys-453–Cys-472, and Cys-496–Cys-514. Ser-352 (charge relay system) is an active-site residue. A Ricin B-type lectin domain is found at 396 to 525 (TSTDVTTSYV…GGANQKWWRR (130 aa)). The tract at residues 401–525 (TTSYVQGYQN…GGANQKWWRR (125 aa)) is essential for the lytic activity, but not for protease function.

It belongs to the peptidase S1 family.

The protein localises to the secreted. In terms of biological role, major serine protease exhibiting lytic activity toward living yeast cells. Similar to elastase in its substrate specificity and has a lectin-like affinity for mannose. Mannoproteins may be the native substrate for RPI. The chain is Serine protease 1 from Rarobacter faecitabidus.